The chain runs to 245 residues: 1-(5-phosphoribosyl)-5-[(5-phosphoribosylamino)methylideneamino] imidazole-4-carboxamide isomerase (245 aa).

The active-site Proton acceptor is the Asp-8. Catalysis depends on Asp-129, which acts as the Proton donor.

Belongs to the HisA/HisF family.

Its subcellular location is the cytoplasm. The enzyme catalyses 1-(5-phospho-beta-D-ribosyl)-5-[(5-phospho-beta-D-ribosylamino)methylideneamino]imidazole-4-carboxamide = 5-[(5-phospho-1-deoxy-D-ribulos-1-ylimino)methylamino]-1-(5-phospho-beta-D-ribosyl)imidazole-4-carboxamide. It participates in amino-acid biosynthesis; L-histidine biosynthesis; L-histidine from 5-phospho-alpha-D-ribose 1-diphosphate: step 4/9. The sequence is that of 1-(5-phosphoribosyl)-5-[(5-phosphoribosylamino)methylideneamino] imidazole-4-carboxamide isomerase from Rhodopseudomonas palustris (strain HaA2).